We begin with the raw amino-acid sequence, 691 residues long: DNA ligase (691 aa).

Residues 41-45, 90-91, and Glu-130 contribute to the NAD(+) site; these read DAEYD and SL. The N6-AMP-lysine intermediate role is filled by Lys-132. 4 residues coordinate NAD(+): Arg-153, Glu-190, Lys-307, and Lys-331. Zn(2+) is bound by residues Cys-425, Cys-428, Cys-443, and Cys-449. Positions 610–691 constitute a BRCT domain; the sequence is APQGVLAGKT…LHQLLEGNTP (82 aa).

It belongs to the NAD-dependent DNA ligase family. LigA subfamily. The cofactor is Mg(2+). It depends on Mn(2+) as a cofactor.

It carries out the reaction NAD(+) + (deoxyribonucleotide)n-3'-hydroxyl + 5'-phospho-(deoxyribonucleotide)m = (deoxyribonucleotide)n+m + AMP + beta-nicotinamide D-nucleotide.. In terms of biological role, DNA ligase that catalyzes the formation of phosphodiester linkages between 5'-phosphoryl and 3'-hydroxyl groups in double-stranded DNA using NAD as a coenzyme and as the energy source for the reaction. It is essential for DNA replication and repair of damaged DNA. The protein is DNA ligase of Burkholderia ambifaria (strain MC40-6).